A 648-amino-acid polypeptide reads, in one-letter code: Calpain-5 (648 aa).

The Calpain catalytic domain maps to 28 to 353 (PFVDTLFPPT…FTDISLCQLF (326 aa)). Residues Cys83, His252, and Asn290 contribute to the active site. The domain III stretch occupies residues 354-509 (NTSVFSFSRS…VYSDEHIHFS (156 aa)). Residues 502–625 (SDEHIHFSPL…ENRDTTLQLT (124 aa)) form the C2 domain.

The protein belongs to the peptidase C2 family. Ca(2+) is required as a cofactor. As to expression, expressed in neuronal, but not in GABA-ergic neurons, intestinal, hypodermal and excretory tissues.

Functionally, required for the correct female sexual development of the soma and germline in hermaphrodite animals, while being fully dispensable in males. Has calcium-dependent proteolytic activity and is involved in the cleavage of tra-2, for which it acts as a potentiator. Capable of calcium-dependent autolysis. Part of the necrosis cell death pathway. Required for necrosis of intestinal cells induced by B.thuringiensis endotoxin Cry6Aa. In Caenorhabditis elegans, this protein is Calpain-5.